Here is a 298-residue protein sequence, read N- to C-terminus: GPN-loop GTPase QQT1 (298 aa).

A GTP-binding site is contributed by 12-17 (GSGKTT). A Gly-Pro-Asn (GPN)-loop; involved in dimer interface motif is present at residues 69–71 (GPN). 173–176 (SKID) contacts GTP.

It belongs to the GPN-loop GTPase family. As to quaternary structure, heterodimer with QQT2. Expressed in vascular tissues, root tips, apical and root meristematic regions, and floral primordia.

It localises to the cytoplasm. Its subcellular location is the nucleus. It is found in the cytoskeleton. The protein resides in the spindle. The protein localises to the phragmoplast. Its function is as follows. Small GTPase that is essential for the correct formation of the tangential divisions in early embryos. Associates with microtubule during mitosis and may function in the positioning of the division plane. May participate in the patterning of the early embryo at the octant-dermatogen transition. Is crucial for normal development of the plant. The chain is GPN-loop GTPase QQT1 from Arabidopsis thaliana (Mouse-ear cress).